Reading from the N-terminus, the 440-residue chain is Phosphoglucosamine mutase (440 aa).

The active-site Phosphoserine intermediate is Ser-97. Mg(2+) contacts are provided by Ser-97, Asp-237, Asp-239, and Asp-241. A Phosphoserine modification is found at Ser-97.

The protein belongs to the phosphohexose mutase family. The cofactor is Mg(2+). In terms of processing, activated by phosphorylation.

It carries out the reaction alpha-D-glucosamine 1-phosphate = D-glucosamine 6-phosphate. Functionally, catalyzes the conversion of glucosamine-6-phosphate to glucosamine-1-phosphate. The chain is Phosphoglucosamine mutase from Nautilia profundicola (strain ATCC BAA-1463 / DSM 18972 / AmH).